The primary structure comprises 197 residues: Protein GrpE (197 aa).

Residues 1 to 41 (MSSKEQKTPEGQAPEEIITEQHEEVEAVEPDASAEQVDPRD) form a disordered region.

Belongs to the GrpE family. In terms of assembly, homodimer.

It is found in the cytoplasm. In terms of biological role, participates actively in the response to hyperosmotic and heat shock by preventing the aggregation of stress-denatured proteins, in association with DnaK and GrpE. It is the nucleotide exchange factor for DnaK and may function as a thermosensor. Unfolded proteins bind initially to DnaJ; upon interaction with the DnaJ-bound protein, DnaK hydrolyzes its bound ATP, resulting in the formation of a stable complex. GrpE releases ADP from DnaK; ATP binding to DnaK triggers the release of the substrate protein, thus completing the reaction cycle. Several rounds of ATP-dependent interactions between DnaJ, DnaK and GrpE are required for fully efficient folding. In Enterobacter sp. (strain 638), this protein is Protein GrpE.